Consider the following 165-residue polypeptide: 3-isopropylmalate dehydratase small subunit (165 aa).

It belongs to the LeuD family. LeuD type 2 subfamily. As to quaternary structure, heterodimer of LeuC and LeuD.

The catalysed reaction is (2R,3S)-3-isopropylmalate = (2S)-2-isopropylmalate. Its pathway is amino-acid biosynthesis; L-leucine biosynthesis; L-leucine from 3-methyl-2-oxobutanoate: step 2/4. In terms of biological role, catalyzes the isomerization between 2-isopropylmalate and 3-isopropylmalate, via the formation of 2-isopropylmaleate. This chain is 3-isopropylmalate dehydratase small subunit, found in Hydrogenobaculum sp. (strain Y04AAS1).